Consider the following 144-residue polypeptide: Maximins 3/H2 (144 aa).

Residues 1–18 (MNFKYIVAVSFLIASAYA) form the signal peptide. Propeptides lie at residues 19-43 (RSVQ…REIR) and 74-123 (TAEE…KEKR). Ile143 carries the isoleucine amide modification.

Belongs to the bombinin family. As to expression, expressed by the skin glands.

It is found in the secreted. In terms of biological role, maximin-3 shows antibacterial activity against both Gram-positive and Gram-negative bacteria. It also shows antimicrobial activity against the fungus C.albicans, but not against A.flavus nor P.uticale. It has little hemolytic activity. It possess a significant cytotoxicity against tumor cell lines. It possess a significant anti-HIV activity. It shows high spermicidal activity. Maximin-H2 shows antibacterial activity against both Gram-positive and Gram-negative bacteria. It also shows antimicrobial activity against the fungus C.albicans. Shows strong hemolytic activity. The sequence is that of Maximins 3/H2 from Bombina maxima (Giant fire-bellied toad).